The chain runs to 176 residues: MLDAFSKVVIQSDAKAAYIGGSDLTALKTFISEGNKRLDSVNYIASNASCIVSDAVSGMICENPGLIAAGGNCYTNRRMAACLRDGEIILRYVSYALLAGDSSVLEDRCLNGLKETYIALGVPTNSTARAVAIMKAAAVAFVTNTASQRKVEVAAGDCSALAAEVGTYFDKVESSI.

Residues Cys50 and Cys61 each contribute to the phycourobilin site. Asn72 carries the N4-methylasparagine modification. 2 residues coordinate (2R,3E)-phycoerythrobilin: Cys82 and Cys158.

It belongs to the phycobiliprotein family. In terms of assembly, heterodimer of an alpha and a beta chain. In terms of processing, contains two covalently linked phycoerythrobilin chromophores and one covalently linked phycourobilin chromophore.

Its subcellular location is the plastid. It is found in the chloroplast thylakoid membrane. Its function is as follows. Light-harvesting photosynthetic bile pigment-protein from the phycobiliprotein complex. This chain is R-phycoerythrin beta chain (cpeB), found in Aglaothamnion neglectum (Red alga).